The primary structure comprises 393 residues: Lipid-A-disaccharide synthase (393 aa).

It belongs to the LpxB family.

It catalyses the reaction a lipid X + a UDP-2-N,3-O-bis[(3R)-3-hydroxyacyl]-alpha-D-glucosamine = a lipid A disaccharide + UDP + H(+). It functions in the pathway bacterial outer membrane biogenesis; LPS lipid A biosynthesis. Functionally, condensation of UDP-2,3-diacylglucosamine and 2,3-diacylglucosamine-1-phosphate to form lipid A disaccharide, a precursor of lipid A, a phosphorylated glycolipid that anchors the lipopolysaccharide to the outer membrane of the cell. In Actinobacillus pleuropneumoniae serotype 7 (strain AP76), this protein is Lipid-A-disaccharide synthase.